The sequence spans 645 residues: Zinc finger protein 64 (645 aa).

3 C2H2-type zinc fingers span residues 175-197, 203-225, and 231-253; these read HKCE…MRCH, YKCK…LRIH, and FKCQ…LRSH. Residue Glu-286 forms a Glycyl lysine isopeptide (Lys-Gly) (interchain with G-Cter in SUMO2) linkage. The segment at 299-324 adopts a C2H2-type 4; atypical zinc-finger fold; that stretch reads FNCCYPGCHFKTVHGMKDLDRHLRIH. 9 C2H2-type zinc fingers span residues 330–352, 358–380, 386–408, 414–436, 442–465, 467–489, 495–517, 523–546, and 580–602; these read HKCE…MRCH, HKCH…LRIH, YKCQ…LRSH, FQCW…MIVH, FKCE…RIKH, FKCL…SRLH, EKCP…SRVH, FKCD…DKVH, and FRCE…KKQH. Residue Asn-397 forms a Glycyl lysine isopeptide (Lys-Gly) (interchain with G-Cter in SUMO2) linkage. 2 stretches are compositionally biased toward basic and acidic residues: residues 543-554 and 600-610; these read DKVHRDEAKTEN and KQHSDQSENKN. Disordered regions lie at residues 543-567 and 600-645; these read DKVH…REGS and KQHS…SQDL. Val-545 is modified (phosphoserine). Over residues 622–631 the composition is skewed to polar residues; it reads ASGQLSTLVS.

The protein belongs to the krueppel C2H2-type zinc-finger protein family. As to quaternary structure, interacts with ZNF70; this interaction promote the transactivation of the HES1 gene. Interacts with NOTCH1.

It localises to the nucleus. Its function is as follows. May be involved in the regulation of mesenchymal cell differentiation through transactivation of NOTCH1 target genes. In Homo sapiens (Human), this protein is Zinc finger protein 64.